Here is a 486-residue protein sequence, read N- to C-terminus: Carboxypeptidase Y homolog ARB_07161 (486 aa).

The N-terminal stretch at 1 to 17 is a signal peptide; the sequence is MKGLLSLLLVGAANALA. Residue Asn-111 is glycosylated (N-linked (GlcNAc...) asparagine). Ser-241 is an active-site residue. Cystine bridges form between Cys-281–Cys-305, Cys-288–Cys-298, and Cys-327–Cys-334. Residue Asp-403 is part of the active site. Substrate is bound at residue Cys-406. Asn-430 is a glycosylation site (N-linked (GlcNAc...) asparagine). His-462 is a catalytic residue.

It belongs to the peptidase S10 family.

It localises to the secreted. It carries out the reaction Release of a C-terminal amino acid with broad specificity.. In terms of biological role, involved in degradation of small peptides. The sequence is that of Carboxypeptidase Y homolog ARB_07161 from Arthroderma benhamiae (strain ATCC MYA-4681 / CBS 112371) (Trichophyton mentagrophytes).